A 222-amino-acid polypeptide reads, in one-letter code: Large ribosomal subunit protein uL4 (222 aa).

The protein belongs to the universal ribosomal protein uL4 family. In terms of assembly, part of the 50S ribosomal subunit.

Its function is as follows. One of the primary rRNA binding proteins, this protein initially binds near the 5'-end of the 23S rRNA. It is important during the early stages of 50S assembly. It makes multiple contacts with different domains of the 23S rRNA in the assembled 50S subunit and ribosome. In terms of biological role, forms part of the polypeptide exit tunnel. The sequence is that of Large ribosomal subunit protein uL4 from Acidobacterium capsulatum (strain ATCC 51196 / DSM 11244 / BCRC 80197 / JCM 7670 / NBRC 15755 / NCIMB 13165 / 161).